Consider the following 199-residue polypeptide: ATP-dependent Clp protease proteolytic subunit (199 aa).

The active-site Nucleophile is S97. H122 is a catalytic residue.

It belongs to the peptidase S14 family. As to quaternary structure, fourteen ClpP subunits assemble into 2 heptameric rings which stack back to back to give a disk-like structure with a central cavity, resembling the structure of eukaryotic proteasomes.

Its subcellular location is the cytoplasm. It catalyses the reaction Hydrolysis of proteins to small peptides in the presence of ATP and magnesium. alpha-casein is the usual test substrate. In the absence of ATP, only oligopeptides shorter than five residues are hydrolyzed (such as succinyl-Leu-Tyr-|-NHMec, and Leu-Tyr-Leu-|-Tyr-Trp, in which cleavage of the -Tyr-|-Leu- and -Tyr-|-Trp bonds also occurs).. Cleaves peptides in various proteins in a process that requires ATP hydrolysis. Has a chymotrypsin-like activity. Plays a major role in the degradation of misfolded proteins. This Geotalea daltonii (strain DSM 22248 / JCM 15807 / FRC-32) (Geobacter daltonii) protein is ATP-dependent Clp protease proteolytic subunit.